We begin with the raw amino-acid sequence, 127 residues long: Large ribosomal subunit protein bL19 (127 aa).

Belongs to the bacterial ribosomal protein bL19 family.

Functionally, this protein is located at the 30S-50S ribosomal subunit interface and may play a role in the structure and function of the aminoacyl-tRNA binding site. This chain is Large ribosomal subunit protein bL19, found in Paraburkholderia phymatum (strain DSM 17167 / CIP 108236 / LMG 21445 / STM815) (Burkholderia phymatum).